Consider the following 247-residue polypeptide: Inhibitory synaptic factor 1 (247 aa).

The stretch at arginine 30 to glutamate 65 forms a coiled coil. Disordered stretches follow at residues aspartate 69–leucine 90, alanine 112–valine 166, and aspartate 180–lysine 217. Positions glycine 76 to glutamate 85 are enriched in polar residues.

Belongs to the INSYN1 family.

The protein resides in the postsynaptic density. Functionally, may be a component of the protein machinery at the inhibitory synapses, probably acting as a scaffold. The sequence is that of Inhibitory synaptic factor 1 from Xenopus laevis (African clawed frog).